Consider the following 138-residue polypeptide: Transcription antitermination protein NusB (138 aa).

This sequence belongs to the NusB family.

Involved in transcription antitermination. Required for transcription of ribosomal RNA (rRNA) genes. Binds specifically to the boxA antiterminator sequence of the ribosomal RNA (rrn) operons. The protein is Transcription antitermination protein NusB of Helicobacter acinonychis (strain Sheeba).